Reading from the N-terminus, the 306-residue chain is Ribonuclease Z (306 aa).

Zn(2+) is bound by residues His63, His65, Asp67, His68, His141, Asp208, and His266. Residue Asp67 is the Proton acceptor of the active site.

The protein belongs to the RNase Z family. Homodimer. The cofactor is Zn(2+).

It carries out the reaction Endonucleolytic cleavage of RNA, removing extra 3' nucleotides from tRNA precursor, generating 3' termini of tRNAs. A 3'-hydroxy group is left at the tRNA terminus and a 5'-phosphoryl group is left at the trailer molecule.. Functionally, zinc phosphodiesterase, which displays some tRNA 3'-processing endonuclease activity. Probably involved in tRNA maturation, by removing a 3'-trailer from precursor tRNA. The protein is Ribonuclease Z of Chlamydia abortus (strain DSM 27085 / S26/3) (Chlamydophila abortus).